We begin with the raw amino-acid sequence, 330 residues long: Aspartate--ammonia ligase (330 aa).

Belongs to the class-II aminoacyl-tRNA synthetase family. AsnA subfamily.

It is found in the cytoplasm. The enzyme catalyses L-aspartate + NH4(+) + ATP = L-asparagine + AMP + diphosphate + H(+). The protein operates within amino-acid biosynthesis; L-asparagine biosynthesis; L-asparagine from L-aspartate (ammonia route): step 1/1. This Shigella dysenteriae serotype 1 (strain Sd197) protein is Aspartate--ammonia ligase.